A 322-amino-acid polypeptide reads, in one-letter code: Sideroflexin-1 (322 aa).

At serine 2 the chain carries N-acetylserine. The Mitochondrial matrix segment spans residues 2 to 102 (SGEVPPNINI…MSAQVPMNMT (101 aa)). A helical membrane pass occupies residues 103-120 (ITGCMMTFYRTTPAVLFW). Over 121-146 (QWINQSFNAVVNYTNRSGDAPLTVNE) the chain is Mitochondrial intermembrane. Residues 147-167 (LGTAYVSATTGAVATALGLNA) traverse the membrane as a helical segment. The Mitochondrial matrix segment spans residues 168-174 (LTKHVSP). A helical transmembrane segment spans residues 175 to 195 (LIGRFVPFAAVAAANCINIPL). Topologically, residues 196-228 (MRQRELKVGIPVTDENGTRLGESTNAAKQAITQ) are mitochondrial intermembrane. A helical transmembrane segment spans residues 229–249 (VVISRILMAAPGMAIPPFIMN). The Mitochondrial matrix segment spans residues 250 to 266 (TLEKKAFLKRFPWMSAP). The chain crosses the membrane as a helical span at residues 267–287 (IQVTLVGFCLVFATPLCCALF). At 288 to 322 (PQKSSMSVTSLEDDLQASIQKSHPELRRVYFNKGL) the chain is on the mitochondrial intermembrane side.

It belongs to the sideroflexin family.

The protein resides in the mitochondrion inner membrane. The catalysed reaction is L-serine(in) = L-serine(out). It catalyses the reaction L-alanine(in) = L-alanine(out). The enzyme catalyses L-cysteine(in) = L-cysteine(out). Amino acid transporter importing serine, an essential substrate of the mitochondrial branch of the one-carbon pathway, into mitochondria. Mitochondrial serine is then converted to glycine and formate, which exits to the cytosol where it is used to generate the charged folates that serve as one-carbon donors. May also transport other amino acids including alanine and cysteine. This Rattus norvegicus (Rat) protein is Sideroflexin-1 (Sfxn1).